Here is a 378-residue protein sequence, read N- to C-terminus: Protein RecA (378 aa).

79 to 86 (GPESSGKT) contributes to the ATP binding site.

This sequence belongs to the RecA family.

The protein localises to the cytoplasm. Can catalyze the hydrolysis of ATP in the presence of single-stranded DNA, the ATP-dependent uptake of single-stranded DNA by duplex DNA, and the ATP-dependent hybridization of homologous single-stranded DNAs. It interacts with LexA causing its activation and leading to its autocatalytic cleavage. This Streptococcus pyogenes serotype M49 (strain NZ131) protein is Protein RecA.